Consider the following 545-residue polypeptide: T-complex protein 1 subunit gamma (545 aa).

Methionine 1 carries the post-translational modification N-acetylmethionine. Residues 1–24 (MMGHRPVLVLSQNTKRESGRKVQS) are disordered. The residue at position 11 (serine 11) is a Phosphoserine. Lysine 15 is covalently cross-linked (Glycyl lysine isopeptide (Lys-Gly) (interchain with G-Cter in SUMO2)). 7 residues coordinate ADP: glycine 42, glycine 94, threonine 95, threonine 96, serine 97, threonine 162, and lysine 163. The ATP site is built by glycine 42, glycine 94, threonine 95, and threonine 96. A Phosphoserine modification is found at serine 170. Residue lysine 222 is modified to N6-acetyllysine. Serine 243 and serine 244 each carry phosphoserine. Tyrosine 247 carries the phosphotyrosine modification. Residues lysine 248 and lysine 249 each participate in a glycyl lysine isopeptide (Lys-Gly) (interchain with G-Cter in SUMO2) cross-link. Serine 252 carries the post-translational modification Phosphoserine. Residues cysteine 366 and cysteine 372 are joined by a disulfide bond. Lysine 381 is covalently cross-linked (Glycyl lysine isopeptide (Lys-Gly) (interchain with G-Cter in SUMO2)). Glycine 411 serves as a coordination point for ADP. Glycine 411 contacts ATP. A phosphothreonine mark is found at threonine 430 and threonine 459. Residues glycine 482, glutamate 483, glutamate 497, and lysine 502 each contribute to the ADP site. Residue glycine 482 coordinates ATP. Glutamate 497 is an ATP binding site. The tract at residues 526–545 (HKKKGDDQSRQGGAPDAGQE) is disordered.

The protein belongs to the TCP-1 chaperonin family. As to quaternary structure, component of the chaperonin-containing T-complex (TRiC), a hexadecamer composed of two identical back-to-back stacked rings enclosing a protein folding chamber. Each ring is made up of eight different subunits: TCP1/CCT1, CCT2, CCT3, CCT4, CCT5, CCT6A/CCT6, CCT7, CCT8. Interacts with PACRG. Interacts with DNAAF4. Interacts with DLEC1.

It is found in the cytoplasm. It catalyses the reaction ATP + H2O = ADP + phosphate + H(+). Functionally, component of the chaperonin-containing T-complex (TRiC), a molecular chaperone complex that assists the folding of actin, tubulin and other proteins upon ATP hydrolysis. The TRiC complex mediates the folding of WRAP53/TCAB1, thereby regulating telomere maintenance. As part of the TRiC complex may play a role in the assembly of BBSome, a complex involved in ciliogenesis regulating transports vesicles to the cilia. In Macaca fascicularis (Crab-eating macaque), this protein is T-complex protein 1 subunit gamma (CCT3).